The sequence spans 452 residues: Probable glycine dehydrogenase (decarboxylating) subunit 1 (452 aa).

It belongs to the GcvP family. N-terminal subunit subfamily. As to quaternary structure, the glycine cleavage system is composed of four proteins: P, T, L and H. In this organism, the P 'protein' is a heterodimer of two subunits.

The catalysed reaction is N(6)-[(R)-lipoyl]-L-lysyl-[glycine-cleavage complex H protein] + glycine + H(+) = N(6)-[(R)-S(8)-aminomethyldihydrolipoyl]-L-lysyl-[glycine-cleavage complex H protein] + CO2. In terms of biological role, the glycine cleavage system catalyzes the degradation of glycine. The P protein binds the alpha-amino group of glycine through its pyridoxal phosphate cofactor; CO(2) is released and the remaining methylamine moiety is then transferred to the lipoamide cofactor of the H protein. This chain is Probable glycine dehydrogenase (decarboxylating) subunit 1, found in Sphingopyxis alaskensis (strain DSM 13593 / LMG 18877 / RB2256) (Sphingomonas alaskensis).